A 119-amino-acid polypeptide reads, in one-letter code: Multi-drug resistance efflux pump PmrA homolog (119 aa).

Helical transmembrane passes span Ile1–Ser20, Leu22–Val42, Met64–Ile84, and Ala88–Phe108.

The protein belongs to the major facilitator superfamily.

The protein localises to the cell membrane. The protein is Multi-drug resistance efflux pump PmrA homolog (pmrA) of Lactococcus lactis subsp. cremoris (Streptococcus cremoris).